The chain runs to 180 residues: Oligoribonuclease (180 aa).

An Exonuclease domain is found at 7–170 (LIWIDLEMTG…DDIRDSINEL (164 aa)). Residue Y128 is part of the active site.

Belongs to the oligoribonuclease family.

The protein localises to the cytoplasm. 3'-to-5' exoribonuclease specific for small oligoribonucleotides. This chain is Oligoribonuclease, found in Marinobacter nauticus (strain ATCC 700491 / DSM 11845 / VT8) (Marinobacter aquaeolei).